The primary structure comprises 368 residues: Phospho-N-acetylmuramoyl-pentapeptide-transferase (368 aa).

A run of 9 helical transmembrane segments spans residues 30 to 50 (AAAI…IRYL), 72 to 92 (LPTM…LLWS), 98 to 118 (HVWL…IDDY), 139 to 159 (VALG…SVLM), 170 to 190 (LTID…TALS), 208 to 228 (AIVV…VYAT), 238 to 258 (GGEI…FLWF), 264 to 286 (EIFM…ALLI), and 345 to 365 (KIVI…LMTL).

This sequence belongs to the glycosyltransferase 4 family. MraY subfamily. Requires Mg(2+) as cofactor.

The protein resides in the cell inner membrane. The enzyme catalyses UDP-N-acetyl-alpha-D-muramoyl-L-alanyl-gamma-D-glutamyl-meso-2,6-diaminopimeloyl-D-alanyl-D-alanine + di-trans,octa-cis-undecaprenyl phosphate = di-trans,octa-cis-undecaprenyl diphospho-N-acetyl-alpha-D-muramoyl-L-alanyl-D-glutamyl-meso-2,6-diaminopimeloyl-D-alanyl-D-alanine + UMP. It functions in the pathway cell wall biogenesis; peptidoglycan biosynthesis. Its function is as follows. Catalyzes the initial step of the lipid cycle reactions in the biosynthesis of the cell wall peptidoglycan: transfers peptidoglycan precursor phospho-MurNAc-pentapeptide from UDP-MurNAc-pentapeptide onto the lipid carrier undecaprenyl phosphate, yielding undecaprenyl-pyrophosphoryl-MurNAc-pentapeptide, known as lipid I. This chain is Phospho-N-acetylmuramoyl-pentapeptide-transferase, found in Chlorobium luteolum (strain DSM 273 / BCRC 81028 / 2530) (Pelodictyon luteolum).